The primary structure comprises 60 residues: Large ribosomal subunit protein bL32 (60 aa).

It belongs to the bacterial ribosomal protein bL32 family.

The chain is Large ribosomal subunit protein bL32 from Desulfovibrio desulfuricans (strain ATCC 27774 / DSM 6949 / MB).